Consider the following 314-residue polypeptide: Ribose-phosphate pyrophosphokinase (314 aa).

ATP is bound by residues 37-39 (DGE) and 96-97 (RQ). Residues H131 and D170 each contribute to the Mg(2+) site. Residue K194 is part of the active site. Residues R196, D220, and 224–228 (DTGGT) contribute to the D-ribose 5-phosphate site.

It belongs to the ribose-phosphate pyrophosphokinase family. Class I subfamily. As to quaternary structure, homohexamer. Mg(2+) serves as cofactor.

It localises to the cytoplasm. The catalysed reaction is D-ribose 5-phosphate + ATP = 5-phospho-alpha-D-ribose 1-diphosphate + AMP + H(+). It functions in the pathway metabolic intermediate biosynthesis; 5-phospho-alpha-D-ribose 1-diphosphate biosynthesis; 5-phospho-alpha-D-ribose 1-diphosphate from D-ribose 5-phosphate (route I): step 1/1. Involved in the biosynthesis of the central metabolite phospho-alpha-D-ribosyl-1-pyrophosphate (PRPP) via the transfer of pyrophosphoryl group from ATP to 1-hydroxyl of ribose-5-phosphate (Rib-5-P). The protein is Ribose-phosphate pyrophosphokinase of Vibrio parahaemolyticus serotype O3:K6 (strain RIMD 2210633).